The sequence spans 275 residues: Pyridoxal phosphate homeostasis protein (275 aa).

Phosphoserine is present on Ser6. Position 47 is an N6-(pyridoxal phosphate)lysine (Lys47). Tyr69 bears the Phosphotyrosine mark. Lys125 is subject to N6-succinyllysine. Ser226 and Ser244 each carry phosphoserine.

It belongs to the pyridoxal phosphate-binding protein YggS/PROSC family.

Pyridoxal 5'-phosphate (PLP)-binding protein, which may be involved in intracellular homeostatic regulation of pyridoxal 5'-phosphate (PLP), the active form of vitamin B6. In Pongo abelii (Sumatran orangutan), this protein is Pyridoxal phosphate homeostasis protein.